Reading from the N-terminus, the 194-residue chain is Probable thymidylate kinase (194 aa).

ATP is bound at residue 9–16 (GIDGVGKS).

This sequence belongs to the thymidylate kinase family.

The catalysed reaction is dTMP + ATP = dTDP + ADP. This Methanopyrus kandleri (strain AV19 / DSM 6324 / JCM 9639 / NBRC 100938) protein is Probable thymidylate kinase.